Reading from the N-terminus, the 491-residue chain is Myocilin (491 aa).

An N-terminal signal peptide occupies residues 1–18 (MPAVQLLLLACPVWDVGA). N43 carries an N-linked (GlcNAc...) asparagine glycan. Residues 98-171 (QETPEGLQRE…QEVARLRRGQ (74 aa)) adopt a coiled-coil conformation. A disordered region spans residues 151-189 (ENLARRLESSSQEVARLRRGQCPQTRDTARDVPPGSREV). Residues 231–490 (GCGELVWVGE…MVTYDIKLSK (260 aa)) enclose the Olfactomedin-like domain. Cysteines 232 and 420 form a disulfide. Ca(2+) is bound by residues D367, N415, A416, I464, and D465.

In terms of assembly, homodimer (via N-terminus). Can also form higher oligomers. Interacts with OLFM3, FN1, NRCAM, GLDN and NFASC. Interacts (via N-terminus) with MYL2. Interacts with SFRP1, FRZB, FZD7, FZD10, FZD1 and WIF1; regulates Wnt signaling. Interacts with SNTA1; regulates muscle hypertrophy. Interacts with ERBB2 and ERBB3; activates ERBB2-ERBB3 signaling pathway. Interacts with SNCG; affects its secretion and its aggregation. Palmitoylated. In terms of processing, undergoes a calcium-dependent proteolytic cleavage at Arg-213 by CAPN2 in the endoplasmic reticulum. The result is the production of two fragments, one of 35 kDa containing the C-terminal olfactomedin-like domain, and another of 20 kDa containing the N-terminal leucine zipper-like domain. Post-translationally, glycosylated.

The protein localises to the secreted. Its subcellular location is the golgi apparatus. The protein resides in the cytoplasmic vesicle. It is found in the extracellular space. It localises to the extracellular matrix. The protein localises to the extracellular exosome. Its subcellular location is the mitochondrion. The protein resides in the mitochondrion intermembrane space. It is found in the mitochondrion inner membrane. It localises to the mitochondrion outer membrane. The protein localises to the rough endoplasmic reticulum. Its subcellular location is the cell projection. The protein resides in the cilium. It is found in the endoplasmic reticulum. Its function is as follows. Secreted glycoprotein regulating the activation of different signaling pathways in adjacent cells to control different processes including cell adhesion, cell-matrix adhesion, cytoskeleton organization and cell migration. Promotes substrate adhesion, spreading and formation of focal contacts. Negatively regulates cell-matrix adhesion and stress fiber assembly through Rho protein signal transduction. Modulates the organization of actin cytoskeleton by stimulating the formation of stress fibers through interactions with components of Wnt signaling pathways. Promotes cell migration through activation of PTK2 and the downstream phosphatidylinositol 3-kinase signaling. Plays a role in bone formation and promotes osteoblast differentiation in a dose-dependent manner through mitogen-activated protein kinase signaling. Mediates myelination in the peripheral nervous system through ERBB2/ERBB3 signaling. Plays a role as a regulator of muscle hypertrophy through the components of dystrophin-associated protein complex. Involved in positive regulation of mitochondrial depolarization. Plays a role in neurite outgrowth. May participate in the obstruction of fluid outflow in the trabecular meshwork. The polypeptide is Myocilin (MYOC) (Macaca fascicularis (Crab-eating macaque)).